Consider the following 135-residue polypeptide: Large ribosomal subunit protein uL16 (135 aa).

This sequence belongs to the universal ribosomal protein uL16 family. As to quaternary structure, part of the 50S ribosomal subunit.

Functionally, binds 23S rRNA and is also seen to make contacts with the A and possibly P site tRNAs. The protein is Large ribosomal subunit protein uL16 of Coprothermobacter proteolyticus (strain ATCC 35245 / DSM 5265 / OCM 4 / BT).